A 283-amino-acid polypeptide reads, in one-letter code: Elongation factor Ts (283 aa).

Residues 80 to 83 (TDFV) are involved in Mg(2+) ion dislocation from EF-Tu.

This sequence belongs to the EF-Ts family.

The protein resides in the cytoplasm. In terms of biological role, associates with the EF-Tu.GDP complex and induces the exchange of GDP to GTP. It remains bound to the aminoacyl-tRNA.EF-Tu.GTP complex up to the GTP hydrolysis stage on the ribosome. The polypeptide is Elongation factor Ts (Pectobacterium atrosepticum (strain SCRI 1043 / ATCC BAA-672) (Erwinia carotovora subsp. atroseptica)).